A 510-amino-acid polypeptide reads, in one-letter code: Leucine-rich repeat-containing protein 53 (510 aa).

LRR repeat units lie at residues 34-55, 58-79, 82-102, 108-129, 132-153, 158-179, and 182-203; these read TTRV…NLSL, NLAL…ALDG, MLRT…TDHT, SLQV…WFRN, GLTR…SFGG, SLRH…AFRP, and QLQE…FTPL. Residues 214-271 form the LRRCT domain; the sequence is NQWSCTCDLHPLARFLRNYIKSSAHTLRNAKDLNCQPSTAAVAAAQSVLRLSETNCDP. Residues 294 to 314 traverse the membrane as a helical segment; it reads LLTVLGFAGAVGLTCLGLVVF.

It localises to the membrane. The sequence is that of Leucine-rich repeat-containing protein 53 (LRRC53) from Macaca fascicularis (Crab-eating macaque).